The sequence spans 270 residues: Structure-specific endonuclease subunit SLX1 (270 aa).

In terms of domain architecture, GIY-YIG spans 9–94; that stretch reads RFFGVYLLYC…PQASRRLTHV (86 aa). The SLX1-type zinc-finger motif lies at 182-234; it reads CSLCARLLQDEEGPLCCPHPGCPLRAHIICLAEEFLQEEPGQLLPLEGHCPSC.

This sequence belongs to the SLX1 family. In terms of assembly, forms a heterodimer with SLX4. A divalent metal cation serves as cofactor. Expressed in testis, colon, bone marrow, brain, thymus and to a lesser extent in heart, kidney, skeletal muscle and spleen.

It localises to the nucleus. Catalytic subunit of the SLX1-SLX4 structure-specific endonuclease that resolves DNA secondary structures generated during DNA repair and recombination. Has endonuclease activity towards branched DNA substrates, introducing single-strand cuts in duplex DNA close to junctions with ss-DNA. Has a preference for 5'-flap structures, and promotes symmetrical cleavage of static and migrating Holliday junctions (HJs). Resolves HJs by generating two pairs of ligatable, nicked duplex products. This chain is Structure-specific endonuclease subunit SLX1 (Slx1b), found in Mus musculus (Mouse).